Here is a 480-residue protein sequence, read N- to C-terminus: Glutamyl-tRNA(Gln) amidotransferase subunit A (480 aa).

Active-site charge relay system residues include K74 and S149. Residue S173 is the Acyl-ester intermediate of the active site.

It belongs to the amidase family. GatA subfamily. Heterotrimer of A, B and C subunits.

It catalyses the reaction L-glutamyl-tRNA(Gln) + L-glutamine + ATP + H2O = L-glutaminyl-tRNA(Gln) + L-glutamate + ADP + phosphate + H(+). Its function is as follows. Allows the formation of correctly charged Gln-tRNA(Gln) through the transamidation of misacylated Glu-tRNA(Gln) in organisms which lack glutaminyl-tRNA synthetase. The reaction takes place in the presence of glutamine and ATP through an activated gamma-phospho-Glu-tRNA(Gln). In Vesicomyosocius okutanii subsp. Calyptogena okutanii (strain HA), this protein is Glutamyl-tRNA(Gln) amidotransferase subunit A.